A 26-amino-acid polypeptide reads, in one-letter code: AMP deaminase 1 (26 aa).

The protein belongs to the metallo-dependent hydrolases superfamily. Adenosine and AMP deaminases family. In terms of assembly, homotetramer. Zn(2+) is required as a cofactor.

It carries out the reaction AMP + H2O + H(+) = IMP + NH4(+). The protein operates within purine metabolism; IMP biosynthesis via salvage pathway; IMP from AMP: step 1/1. Its function is as follows. AMP deaminase plays a critical role in energy metabolism. This Oryctolagus cuniculus (Rabbit) protein is AMP deaminase 1 (AMPD1).